A 143-amino-acid polypeptide reads, in one-letter code: ATP synthase subunit b' (143 aa).

Residues 6 to 26 (ATLPLMALQFVLLAIILNAIF) traverse the membrane as a helical segment.

This sequence belongs to the ATPase B chain family. As to quaternary structure, F-type ATPases have 2 components, F(1) - the catalytic core - and F(0) - the membrane proton channel. F(1) has five subunits: alpha(3), beta(3), gamma(1), delta(1), epsilon(1). F(0) has four main subunits: a(1), b(1), b'(1) and c(10-14). The alpha and beta chains form an alternating ring which encloses part of the gamma chain. F(1) is attached to F(0) by a central stalk formed by the gamma and epsilon chains, while a peripheral stalk is formed by the delta, b and b' chains.

Its subcellular location is the cellular thylakoid membrane. F(1)F(0) ATP synthase produces ATP from ADP in the presence of a proton or sodium gradient. F-type ATPases consist of two structural domains, F(1) containing the extramembraneous catalytic core and F(0) containing the membrane proton channel, linked together by a central stalk and a peripheral stalk. During catalysis, ATP synthesis in the catalytic domain of F(1) is coupled via a rotary mechanism of the central stalk subunits to proton translocation. Functionally, component of the F(0) channel, it forms part of the peripheral stalk, linking F(1) to F(0). The b'-subunit is a diverged and duplicated form of b found in plants and photosynthetic bacteria. The protein is ATP synthase subunit b' of Crocosphaera subtropica (strain ATCC 51142 / BH68) (Cyanothece sp. (strain ATCC 51142)).